The following is a 690-amino-acid chain: Glycine--tRNA ligase beta subunit (690 aa).

Belongs to the class-II aminoacyl-tRNA synthetase family. As to quaternary structure, tetramer of two alpha and two beta subunits.

Its subcellular location is the cytoplasm. The catalysed reaction is tRNA(Gly) + glycine + ATP = glycyl-tRNA(Gly) + AMP + diphosphate. This is Glycine--tRNA ligase beta subunit from Buchnera aphidicola subsp. Acyrthosiphon pisum (strain Tuc7).